Reading from the N-terminus, the 512-residue chain is ATP synthase subunit alpha (512 aa).

Residue 169-176 (GDRKTGKT) participates in ATP binding.

The protein belongs to the ATPase alpha/beta chains family. As to quaternary structure, F-type ATPases have 2 components, CF(1) - the catalytic core - and CF(0) - the membrane proton channel. CF(1) has five subunits: alpha(3), beta(3), gamma(1), delta(1), epsilon(1). CF(0) has three main subunits: a(1), b(2) and c(9-12). The alpha and beta chains form an alternating ring which encloses part of the gamma chain. CF(1) is attached to CF(0) by a central stalk formed by the gamma and epsilon chains, while a peripheral stalk is formed by the delta and b chains.

The protein resides in the cell membrane. It catalyses the reaction ATP + H2O + 4 H(+)(in) = ADP + phosphate + 5 H(+)(out). Produces ATP from ADP in the presence of a proton gradient across the membrane. The alpha chain is a regulatory subunit. This chain is ATP synthase subunit alpha, found in Limosilactobacillus fermentum (strain NBRC 3956 / LMG 18251) (Lactobacillus fermentum).